The primary structure comprises 332 residues: MATIKSELIKNFAEEEAIHHNKISIVGTGSVGVACAISILLKGLSDELVLVDVDEGKLKGETMDLQHGSPFMKMPNIVSSKDYLVTANSNLVIITAGARQKKGETRLDLVQRNVSIFKLMIPNITQYSPHCKLLIVTNPVDILTYVAWKLSGFPKNRVIGSGCNLDSARFRYFIGQRLGIHSESCHGLILGEHGDSSVPVWSGVNIAGVPLKDLNPDIGTDKDPEQWENVHKKVISSGYEMVKMKGYTSWGISLSVADLTESILKNLRRVHPVSTLSKGLYGINEDIFLSVPCILGENGITDLIKVKLTLEEEACLQKSAETLWEIQKELKL.

Position 2 is an N-acetylalanine (Ala2). N6-acetyllysine; alternate is present on residues Lys5 and Lys57. At Lys5 the chain carries N6-succinyllysine; alternate. 29-57 (GSVGVACAISILLKGLSDELVLVDVDEGK) serves as a coordination point for NAD(+). A Glycyl lysine isopeptide (Lys-Gly) (interchain with G-Cter in SUMO2); alternate cross-link involves residue Lys57. An N6-acetyllysine modification is found at Lys81. Position 99 (Arg99) interacts with NAD(+). Arg106 is a binding site for substrate. Lys118 carries the N6-acetyllysine; alternate modification. At Lys118 the chain carries N6-succinyllysine; alternate. Asn138 is an NAD(+) binding site. Residues Asn138 and Arg169 each coordinate substrate. Residue His193 is the Proton acceptor of the active site. N6-acetyllysine is present on Lys232. Tyr239 carries the phosphotyrosine modification. Lys243 bears the N6-acetyllysine mark. Residue Thr248 coordinates substrate. Thr309 carries the post-translational modification Phosphothreonine. N6-acetyllysine; alternate is present on Lys318. Lys318 bears the N6-succinyllysine; alternate mark. Thr322 carries the phosphothreonine modification.

It belongs to the LDH/MDH superfamily. LDH family. As to expression, testis-specific.

It is found in the cytoplasm. It catalyses the reaction (S)-lactate + NAD(+) = pyruvate + NADH + H(+). It functions in the pathway fermentation; pyruvate fermentation to lactate; (S)-lactate from pyruvate: step 1/1. Its function is as follows. Catalyzes the interconversion of L-lactate and pyruvate with nicotinamide adenine dinucleotide NAD(+) as a coenzyme. Significantly increases the transcriptional activity of JUN, when overexpressed. The polypeptide is L-lactate dehydrogenase A-like 6A (LDHAL6A) (Homo sapiens (Human)).